A 264-amino-acid chain; its full sequence is Catechol O-methyltransferase B (264 aa).

Residues 1–29 (MLGVLLCWCLGASVLLYVLYSWLIPAAVQ) form the signal peptide. An N-linked (GlcNAc...) asparagine glycan is attached at N31. S-adenosyl-L-methionine is bound by residues V92, S122, E140, and D191. D191 provides a ligand contact to Mg(2+). K194 serves as a coordination point for substrate. Mg(2+)-binding residues include D219 and N220. Substrate is bound by residues N220 and E249.

It belongs to the class I-like SAM-binding methyltransferase superfamily. Cation-dependent O-methyltransferase family. Mg(2+) is required as a cofactor. As to expression, strongly expressed in eye, diencephalon, spinal cord, hindbrain, liver, kidney and telencephalon. Also detected at very low levels in muscle, spleen, anterior gut and heart. In eye, expressed strongly in retina. In brain, expressed in the central part of the telencephalon, the periventricular gray zone of the optic tectum, the periglomerular nucleus, the olfactory bulb, and the region adjacent to the diencephalic ventricle in the hypothalamus. Expressed in gill, with strongest expression in gill filaments nearest the gill arch, and in esophageal epithelium.

It localises to the secreted. It carries out the reaction a catechol + S-adenosyl-L-methionine = a guaiacol + S-adenosyl-L-homocysteine + H(+). Catalyzes the O-methylation, and thereby the inactivation, of catecholamine neurotransmitters and catechol hormones. This Danio rerio (Zebrafish) protein is Catechol O-methyltransferase B.